Consider the following 354-residue polypeptide: Glutaminyl-peptide cyclotransferase (354 aa).

The transit peptide at 1 to 8 (MRLLLRNY) directs the protein to the mitochondrion. Residues C136 and C158 are joined by a disulfide bond. Residue D153 participates in Zn(2+) binding. Residue E190 is the Proton acceptor of the active site. E191 is a Zn(2+) binding site. Residue D228 is the Proton acceptor of the active site. Residue H318 coordinates Zn(2+).

It belongs to the glutaminyl-peptide cyclotransferase family.

The protein localises to the secreted. The protein resides in the mitochondrion. It catalyses the reaction N-terminal L-glutaminyl-[peptide] = N-terminal 5-oxo-L-prolyl-[peptide] + NH4(+). Inhibited by imidazoles (imidazole, benzimidazole, 1-benzylimidazole, 1-methylimidazole, P150/03 and N-omega-acetylhistamine) and cysteamines (cysteamine and N-dimethylcysteamine). Inhibited by PDB50 1(3,4-dimethoxyphenyl)-3-(3-imidazol-1-ylpropyl)thiourea. Its function is as follows. Acts as a glutaminyl-peptide cyclotransferase. Responsible for the biosynthesis of pyroglutamyl peptides. Might be more efficient in the conversion of tri and tetrapeptides in vitro. Might have a relative preference for substrates containing hydrophobic amino acids in vitro. This is Glutaminyl-peptide cyclotransferase from Drosophila melanogaster (Fruit fly).